A 504-amino-acid chain; its full sequence is ATP synthase subunit alpha, chloroplastic (504 aa).

170–177 (GDRQTGKT) is a binding site for ATP. Phosphothreonine is present on T257.

Belongs to the ATPase alpha/beta chains family. F-type ATPases have 2 components, CF(1) - the catalytic core - and CF(0) - the membrane proton channel. CF(1) has five subunits: alpha(3), beta(3), gamma(1), delta(1), epsilon(1). CF(0) has four main subunits: a, b, b' and c.

The protein resides in the plastid. It is found in the chloroplast thylakoid membrane. The catalysed reaction is ATP + H2O + 4 H(+)(in) = ADP + phosphate + 5 H(+)(out). Produces ATP from ADP in the presence of a proton gradient across the membrane. The alpha chain is a regulatory subunit. This Nasturtium officinale (Watercress) protein is ATP synthase subunit alpha, chloroplastic.